The following is a 110-amino-acid chain: Iron-sulfur cluster assembly protein CyaY (110 aa).

Belongs to the frataxin family.

Involved in iron-sulfur (Fe-S) cluster assembly. May act as a regulator of Fe-S biogenesis. The sequence is that of Iron-sulfur cluster assembly protein CyaY from Pseudomonas syringae pv. tomato (strain ATCC BAA-871 / DC3000).